Consider the following 190-residue polypeptide: Negative regulator YfiR (190 aa).

R60 serves as a coordination point for GMP. Cystine bridges form between C71–C110 and C145–C152. Residues R175 and H177 each coordinate GMP.

In terms of assembly, homodimer. Interacts with TpbB/YfiN. Interacts with YfiB. The YfiB-YfiR complex is a 2:2 heterotetramer. Cys-71 and Cys-110 form a disulfide bond in the oxidized form but maintain their free form in the non-oxidized YfiR structure. The Cys-145-Cys-152 disulfide bond is well formed in both structures. The Cys145-Cys152 disulfide bond, but not Cys-71-Cys-110, plays an important role in maintaining the correct folding of the protein.

It localises to the periplasm. TpbB/YfiN repression is released through an YfiB-dependent sequestration of YfiR to the outer membrane. Binds vitamin B6 (VB6) or L-Trp at the periphery of the dimer, and both VB6 and L-Trp are able to reduce biofilm formation induced by YfiB L43P mutant. However, VB6 or L-Trp alone may have little effects in interrupting the YfiB-YfiR interaction. GMP enhances the binding affinity between YfiB and YfiR. Functionally, negatively regulates the activity of the diguanylate cyclase TpbB/YfiN, leading to decreased c-di-GMP production. Inhibits TpbB/YfiN allosterically, through a hydrophobic interaction between the C-terminus of YfiR and a conserved region of the periplasmic PAS domain of TpbB/YfiN. Under reducing conditions, may also act as an YfiB-independent sensing device that is able to activate TpbB/YfiN in response to the redox status of the periplasm. Part of the YfiB-TpbB-YfiR (or yfiBNR) system, encoding a tripartite signaling module that modulates intracellular c-di-GMP levels. The system is a key regulator of the small colony variant (SCV) phenotype, and plays an important role in biofilm formation and in vivo persistence. The c-di-GMP produced by TpbB/YfiN stimulates the production of the Pel and Psl exopolysaccharides, which promotes surface attachment, generates an SCV phenotype and confers resistance against phagocytosis. This Pseudomonas aeruginosa (strain ATCC 15692 / DSM 22644 / CIP 104116 / JCM 14847 / LMG 12228 / 1C / PRS 101 / PAO1) protein is Negative regulator YfiR.